The sequence spans 356 residues: Phosphoribosylformylglycinamidine cyclo-ligase (356 aa).

This sequence belongs to the AIR synthase family.

The protein localises to the cytoplasm. The catalysed reaction is 2-formamido-N(1)-(5-O-phospho-beta-D-ribosyl)acetamidine + ATP = 5-amino-1-(5-phospho-beta-D-ribosyl)imidazole + ADP + phosphate + H(+). It functions in the pathway purine metabolism; IMP biosynthesis via de novo pathway; 5-amino-1-(5-phospho-D-ribosyl)imidazole from N(2)-formyl-N(1)-(5-phospho-D-ribosyl)glycinamide: step 2/2. The sequence is that of Phosphoribosylformylglycinamidine cyclo-ligase from Nitrobacter hamburgensis (strain DSM 10229 / NCIMB 13809 / X14).